A 440-amino-acid chain; its full sequence is 2-methylisoborneol synthase (440 aa).

Disordered stretches follow at residues 1–33 (MPDS…IPSA) and 46–74 (LHPP…TVTG). Composition is skewed to pro residues over residues 9–29 (TPPP…PAPV) and 50–63 (VTVP…PPAP). Asp197, Asp198, Glu202, Asn345, Ser349, and Glu353 together coordinate Mg(2+).

The protein belongs to the terpene synthase family. 2-methylisoborneol synthase subfamily. Mg(2+) serves as cofactor.

It carries out the reaction (E)-2-methylgeranyl diphosphate + H2O = 2-methylisoborneol + diphosphate. Catalyzes the cyclization of 2-methylgeranyl diphosphate (2-MeGPP) to 2-methylisoborneol (2-MIB), which likely involves the intermediacy of 2-methyllinalyl diphosphate. Is also able to catalyze the cyclization of geranyl diphosphate (GPP), albeit with much lower efficiency, leading to the formation of a complex mixture of cyclic monoterpenes, consisting of alpha-pinene (6%), beta-pinene (23%), limonene (32%), gamma-terpinene (29%), and delta-terpinene (10%). This Streptomyces coelicolor (strain ATCC BAA-471 / A3(2) / M145) protein is 2-methylisoborneol synthase.